The chain runs to 171 residues: MPLLDSFTVDHTRMEAPAVRVAKTMNTPHGDAITVFDLRFCVPNKEVMPERGIHTLEHLFAGFMRNHLNGNGVEIIDISPMGCRTGFYMSLIGTPDEQRVADAWKAAMEDVLKVQDQNQIPELNVYQCGTYQMHSLQEAQDIARSILERDVRINSNEELALPKEKLQELHI.

Fe cation is bound by residues His-54, His-58, and Cys-128.

It belongs to the LuxS family. Homodimer. The cofactor is Fe cation.

It carries out the reaction S-(5-deoxy-D-ribos-5-yl)-L-homocysteine = (S)-4,5-dihydroxypentane-2,3-dione + L-homocysteine. Its function is as follows. Involved in the synthesis of autoinducer 2 (AI-2) which is secreted by bacteria and is used to communicate both the cell density and the metabolic potential of the environment. The regulation of gene expression in response to changes in cell density is called quorum sensing. Catalyzes the transformation of S-ribosylhomocysteine (RHC) to homocysteine (HC) and 4,5-dihydroxy-2,3-pentadione (DPD). The chain is S-ribosylhomocysteine lyase from Escherichia fergusonii (strain ATCC 35469 / DSM 13698 / CCUG 18766 / IAM 14443 / JCM 21226 / LMG 7866 / NBRC 102419 / NCTC 12128 / CDC 0568-73).